Consider the following 306-residue polypeptide: Pyridoxal 5'-phosphate synthase subunit PdxS (306 aa).

D36 is a binding site for D-ribose 5-phosphate. K93 acts as the Schiff-base intermediate with D-ribose 5-phosphate in catalysis. G165 serves as a coordination point for D-ribose 5-phosphate. R177 is a D-glyceraldehyde 3-phosphate binding site. D-ribose 5-phosphate is bound by residues G226 and 247–248 (GS).

This sequence belongs to the PdxS/SNZ family. In the presence of PdxT, forms a dodecamer of heterodimers.

It catalyses the reaction aldehydo-D-ribose 5-phosphate + D-glyceraldehyde 3-phosphate + L-glutamine = pyridoxal 5'-phosphate + L-glutamate + phosphate + 3 H2O + H(+). Its pathway is cofactor biosynthesis; pyridoxal 5'-phosphate biosynthesis. Functionally, catalyzes the formation of pyridoxal 5'-phosphate from ribose 5-phosphate (RBP), glyceraldehyde 3-phosphate (G3P) and ammonia. The ammonia is provided by the PdxT subunit. Can also use ribulose 5-phosphate and dihydroxyacetone phosphate as substrates, resulting from enzyme-catalyzed isomerization of RBP and G3P, respectively. The sequence is that of Pyridoxal 5'-phosphate synthase subunit PdxS from Salinispora arenicola (strain CNS-205).